Here is a 1008-residue protein sequence, read N- to C-terminus: Kinesin-like protein KIN-5C (1008 aa).

The Kinesin motor domain maps to 12–359 (NVQVLLRCRP…LDYAHRAKSI (348 aa)). 98-105 (GQTGTGKT) contacts ATP. Residues 402–459 (KDRYQQEENERKAMADQIEQMTTSLEANQKQINDLQEKYDSELQHSADLSKKLEATEK) are a coiled coil. Disordered regions lie at residues 910–931 (VEAHLGESQHLQESHSSHTAGI), 943–962 (YKDYEPTGETPVRSEPEVPS), and 975–1008 (ESLMDEFRENHPYEPSKDRRPSLIPRSPLATINN). Residues 913–925 (HLGESQHLQESHS) are compositionally biased toward basic and acidic residues. Positions 979 to 995 (DEFRENHPYEPSKDRRP) are enriched in basic and acidic residues.

Belongs to the TRAFAC class myosin-kinesin ATPase superfamily. Kinesin family. KIN-5/BimC subfamily.

The protein localises to the cytoplasm. The protein resides in the cytoskeleton. It localises to the spindle. Its function is as follows. Responsible for microtubule translocation. May be important for the organization of phragmoplast-specific arrays of microtubules. Plays an essential role in stabilizing the mitotic spindle. Required during mitotic cytokinesis. This is Kinesin-like protein KIN-5C from Oryza sativa subsp. japonica (Rice).